A 233-amino-acid chain; its full sequence is Riboflavin kinase (233 aa).

The H-T-H motif-like stretch occupies residues 1 to 104 (MVRDIKTFKF…YKKIFDDEGT (104 aa)). Residues 105–233 (IKIKGEVFSG…GDFVEVEVIL (129 aa)) form a riboflavin kinase region. Residue 114-119 (GVGEGR) participates in CDP binding. Mg(2+) is bound by residues T143 and N145. FMN is bound by residues T200 and E208. 213–216 (VKLR) contacts CDP.

This sequence belongs to the archaeal riboflavin kinase family. Mg(2+) serves as cofactor.

It carries out the reaction riboflavin + CTP = CDP + FMN + H(+). It functions in the pathway cofactor biosynthesis; FMN biosynthesis; FMN from riboflavin (CTP route): step 1/1. Catalyzes the CTP-dependent phosphorylation of riboflavin (vitamin B2) to form flavin mononucleotide (FMN). The chain is Riboflavin kinase (ribK) from Archaeoglobus fulgidus (strain ATCC 49558 / DSM 4304 / JCM 9628 / NBRC 100126 / VC-16).